A 482-amino-acid chain; its full sequence is Cobyric acid synthase (482 aa).

The GATase cobBQ-type domain occupies 249-436 (QCKIACLALS…LHGLFTSDDF (188 aa)). Residue Cys331 is the Nucleophile of the active site. Residue His428 is part of the active site.

It belongs to the CobB/CobQ family. CobQ subfamily.

It functions in the pathway cofactor biosynthesis; adenosylcobalamin biosynthesis. Functionally, catalyzes amidations at positions B, D, E, and G on adenosylcobyrinic A,C-diamide. NH(2) groups are provided by glutamine, and one molecule of ATP is hydrogenolyzed for each amidation. In Bradyrhizobium diazoefficiens (strain JCM 10833 / BCRC 13528 / IAM 13628 / NBRC 14792 / USDA 110), this protein is Cobyric acid synthase.